Reading from the N-terminus, the 267-residue chain is 2-keto-3-deoxy-L-rhamnonate aldolase (267 aa).

Histidine 49 functions as the Proton acceptor in the catalytic mechanism. Glutamine 151 is a substrate binding site. Glutamate 153 contributes to the Mg(2+) binding site. Substrate is bound by residues alanine 178 and aspartate 179. Aspartate 179 contributes to the Mg(2+) binding site.

The protein belongs to the HpcH/HpaI aldolase family. KDR aldolase subfamily. As to quaternary structure, homohexamer. Mg(2+) serves as cofactor.

The enzyme catalyses 2-dehydro-3-deoxy-L-rhamnonate = (S)-lactaldehyde + pyruvate. Catalyzes the reversible retro-aldol cleavage of 2-keto-3-deoxy-L-rhamnonate (KDR) to pyruvate and lactaldehyde. In Shigella boydii serotype 4 (strain Sb227), this protein is 2-keto-3-deoxy-L-rhamnonate aldolase.